Here is a 227-residue protein sequence, read N- to C-terminus: uncharacterized protein (227 aa).

The signal sequence occupies residues 1–21 (MELKKIAVGLTALLGMSVANA).

This is an uncharacterized protein from Haemophilus influenzae (strain ATCC 51907 / DSM 11121 / KW20 / Rd).